Here is a 575-residue protein sequence, read N- to C-terminus: MSRLDRSRYAALYGPTVGDRIRLADTDLFIEVTEDRSRGPAGTGTGDEAVFGGGKVIRESMGQSLATRAEGAPDLVITGAVVLDHWGVVKADVGIRDGRIVALGKAGNPDTMDGVHPELVMGPGTEIIAGNGKILTAGAVDCHVHLICPQQVPEALGAGITTLIGGGTGPAEGTKATTVTPGSWNLARMLSALDDWPVNVVLLGKGNTVSDESMWEQLRAGAAGFKLHEDWGTTPAAIDACLRVADAAGVQVALHSDTLNEAGFVEDTLAAIAGRAIHAYHTEGAGGGHAPDIITVAAAGNVLPSSTNPTRPHTVNTLDEHLDMLMVCHHLNPSVPEDLAFAESRIRPSTIAAEDILHDLGAISMIGSDSQAMGRIGEVVLRTWQTAHVMKLRRGSLAGDDRADNTRARRYIAKYTICPAVAHGLDAEIGSVEPGKLADLVLYDPAFFGVRPSLVLKGGFIAWAAMGDANASIPTPQPVLPRPMWGAARGPAAASSLIFVAPAAIEDGLPGRLGLATPVVPVADVRRRGKADLPENTATPDIRVDPDTFTVTVDGEAIEADPVSELPMTQRYFLF.

The Urease domain maps to Gly138–Phe575. Ni(2+) contacts are provided by His143, His145, and Lys226. N6-carboxylysine is present on Lys226. Position 228 (His228) interacts with substrate. Ni(2+) contacts are provided by His255 and His281. His329 functions as the Proton donor in the catalytic mechanism. Residue Asp369 participates in Ni(2+) binding.

This sequence belongs to the metallo-dependent hydrolases superfamily. Urease alpha subunit family. Heterotrimer of UreA (gamma), UreB (beta) and UreC (alpha) subunits. Three heterotrimers associate to form the active enzyme. Ni cation is required as a cofactor. Post-translationally, carboxylation allows a single lysine to coordinate two nickel ions.

It localises to the cytoplasm. The enzyme catalyses urea + 2 H2O + H(+) = hydrogencarbonate + 2 NH4(+). It functions in the pathway nitrogen metabolism; urea degradation; CO(2) and NH(3) from urea (urease route): step 1/1. This is Urease subunit alpha from Frankia casuarinae (strain DSM 45818 / CECT 9043 / HFP020203 / CcI3).